Consider the following 1490-residue polypeptide: MTTKRKLIGRLVPCRCFRGEEEIISVLDYSHCSLQQVPKEVFNFERTLEELYLDANQIEELPKQLFNCQALRKLSIPDNDLSSLPTSIASLVNLKELDISKNGVQEFPENIKCCKCLTIIEASVNPISKLPDGFTQLLNLTQLYLNDAFLEFLPANFGRLVKLRILELRENHLKTLPKSMHKLAQLERLDLGNNEFSELPEVLDQIQNLRELWMDNNALQVLPGSIGKLKMLVYLDMSKNRIETVDMDISGCEALEDLLLSSNMLQQLPDSIGLLKKLTTLKVDDNQLTMLPNTIGNLSLLEEFDCSCNELESLPPTIGYLHSLRTLAVDENFLPELPREIGSCKNVTVMSLRSNKLEFLPEEIGQMQRLRVLNLSDNRLKNLPFSFTKLKELAALWLSDNQSKALIPLQTEAHPETKQRVLTNYMFPQQPRGDEDFQSDSDSFNPTLWEEQRQQRMTVAFEFEDKKEDDESAGKVKALSCQAPWDRGQRGITLQPARLSGDCCTPWARCDQQIQDMPVPQSDPQLAWGCISGLQQERSMCAPLPVAAQSTTLPSLSGRQVEINLKRYPTPYPEDLKNMVKSVQNLVGKPSHGVRVENSNPTANTEQTVKEKFEHKWPVAPKEITVEDSFVHPANEMRIGELHPSLAETPLYPPKLVLLGKDKKESTDESEVDKTHCLNNSVSSGTYSDYSPSQASSASSNTRMKVGSLQATAKDAVHNSLWGNRIAPPFPQPLDAKPLLSQREAVPPGNIPQRPDRLPMSDAFPDNWTDGSHYDNTGFVSEEAAGENANNNPLLSSKARSVPAHGRRPLIRQERIVGVPLELEQSTHRHTPETEVPPSNPWQNWTRTPSPFEDRTAFPSKLETTPTTSPLPERKDHMKEPTETPGPFSPGVPWEYHDPTPNRSLGNVFSQIHCRPDSSKGVIAISKSTERLSPLMKDIKSNKFKKSQSIDEIDVGTYKVYNIPLENYASGSDHLGSHERPDKFLGPEHGMSSMSRSQSVPMLDDEMLMYGSSKGPPQQKASMTKKVYQFDQSFNPQGAVEVKAEKRIPPPFAHNSEYVQQPSKNIAKDLVSPRAYRGYPPMEQMFSFSQPSVNEDAMVNAQFASQGPRAGFLRRADSLASSTEMAMFRRVSEPHELPPGDRYGRATYRGGLEGQSSISMTDPQFLKRNGRYEDEHPSYQEVKAQAGSFPAKNLTQRRPLSARSYSTESYGASQTRPVSARPTMAALLEKIPSDYNLGNYGDKTSDNSDIKTRPTPVKGEESCGKMPADWRQQLLRHIEARRLDRTPSQQSNILDNGQEDVSPSGQWNPYPLGRRDVPPDTITKKAGSHIQTLMGSQSLQHRSREQQPYEGNINKVTIQQFQSPLPIQIPSSQATRGPQPGRCLIQTKGQRSMDGYPEQFCVRIEKNPGLGFSISGGISGQGNPFKPSDKGIFVTRVQPDGPASNLLQPGDKILQANGHSFVHMEHEKAVLLLKSFQNTVDLVIQRELTV.

17 LRR repeats span residues 23–44 (IISV…VFNF), 47–68 (TLEE…LFNC), 70–91 (ALRK…IASL), 93–114 (NLKE…IKCC), 116–137 (CLTI…FTQL), 139–161 (NLTQ…GRLV), 162–183 (KLRI…MHKL), 185–206 (QLER…LDQI), 208–229 (NLRE…IGKL), 231–253 (MLVY…SGCE), 254–275 (ALED…IGLL), 277–298 (KLTT…IGNL), 300–321 (LLEE…IGYL), 323–344 (SLRT…IGSC), 346–367 (NVTV…IGQM), 369–391 (RLRV…TKLK), and 392–413 (ELAA…QTEA). Phosphoserine is present on residues Ser-439, Ser-441, and Ser-443. Over residues 663–676 (KKESTDESEVDKTH) the composition is skewed to basic and acidic residues. Disordered stretches follow at residues 663-704 (KKES…NTRM), 785-807 (AGEN…AHGR), and 822-899 (ELEQ…YHDP). Over residues 677 to 686 (CLNNSVSSGT) the composition is skewed to polar residues. The segment covering 687 to 700 (YSDYSPSQASSASS) has biased composition (low complexity). Phosphothreonine is present on Thr-831. Residue Ser-850 is modified to Phosphoserine. The span at 859 to 871 (PSKLETTPTTSPL) shows a compositional bias: low complexity. The residue at position 865 (Thr-865) is a Phosphothreonine. At Ser-869 the chain carries Phosphoserine. Residues 872–882 (PERKDHMKEPT) are compositionally biased toward basic and acidic residues. A phosphoserine mark is found at Ser-947, Ser-949, and Ser-1118. The span at 1134–1144 (PHELPPGDRYG) shows a compositional bias: basic and acidic residues. 2 disordered regions span residues 1134–1158 (PHEL…QSSI) and 1196–1218 (QRRP…TRPV). Arg-1149 is subject to Omega-N-methylarginine. A compositionally biased stretch (polar residues) spans 1196–1217 (QRRPLSARSYSTESYGASQTRP). A Phosphoserine modification is found at Ser-1233. 2 disordered regions span residues 1238-1265 (GNYG…SCGK) and 1282-1312 (RLDR…PYPL). The segment covering 1243–1263 (KTSDNSDIKTRPTPVKGEESC) has biased composition (basic and acidic residues). Polar residues predominate over residues 1286 to 1307 (TPSQQSNILDNGQEDVSPSGQW). Ser-1288 and Ser-1392 each carry phosphoserine. The PDZ domain occupies 1398-1488 (EQFCVRIEKN…TVDLVIQREL (91 aa)).

This sequence belongs to the LAP (LRR and PDZ) protein family. Interacts with CNKSR2 and DLG4. Interacts with CTNND2/Catenin delta-2. Forms a complex with N-cadherin through CTNND2. Interacts with CAMK2A. In terms of tissue distribution, expressed in brain (at protein level).

The protein resides in the cytoplasm. It localises to the postsynaptic density. Its function is as follows. Required for normal synaptic spine architecture and function. Necessary for DISC1 and GRM5 localization to postsynaptic density complexes and for both N-methyl D-aspartate receptor-dependent and metabotropic glutamate receptor-dependent long term depression. This Mus musculus (Mouse) protein is Leucine-rich repeat-containing protein 7 (Lrrc7).